The sequence spans 461 residues: Cysteine--tRNA ligase (461 aa).

Position 28 (Cys28) interacts with Zn(2+). Residues 30–40 carry the 'HIGH' region motif; the sequence is VTIYDLCHIGH. Positions 209, 234, and 238 each coordinate Zn(2+). A 'KMSKS' region motif is present at residues 266 to 270; sequence KMSKS. Lys269 is a binding site for ATP.

Belongs to the class-I aminoacyl-tRNA synthetase family. As to quaternary structure, monomer. It depends on Zn(2+) as a cofactor.

The protein resides in the cytoplasm. It carries out the reaction tRNA(Cys) + L-cysteine + ATP = L-cysteinyl-tRNA(Cys) + AMP + diphosphate. The sequence is that of Cysteine--tRNA ligase from Edwardsiella ictaluri (strain 93-146).